A 289-amino-acid polypeptide reads, in one-letter code: BTB/POZ domain-containing protein KCTD7 (289 aa).

The interval 1–35 is disordered; it reads MVVVTGREPDSRRQDGAMSSSDAEDDFLEPATPTA. The BTB domain maps to 51-149; it reads EVVPLNIGGA…QLENMQPLKG (99 aa).

In terms of assembly, interacts with CUL3.

Its subcellular location is the cell membrane. The protein resides in the cytoplasm. It is found in the cytosol. Its function is as follows. May be involved in the control of excitability of cortical neurons. The protein is BTB/POZ domain-containing protein KCTD7 (KCTD7) of Homo sapiens (Human).